Here is a 173-residue protein sequence, read N- to C-terminus: MNNKTEMGSSTSGNCSSVSTTGLANSGSESDLRQRDLIDERKRKRKQSNRESARRSRMRKQKHLDDLTAQVTHLRKENAQIVAGIAVTTQHYVTIEAENDILRAQVLELNHRLQSLNEIVDFVESSSSGFGMETGQGLFDGGLFDGVMNPMNLGFYNQPIMASASTAGDVFNC.

The segment at 1 to 65 is disordered; it reads MNNKTEMGSS…SRMRKQKHLD (65 aa). The span at 8–22 shows a compositional bias: low complexity; the sequence is GSSTSGNCSSVSTTG. Residues 30-41 show a composition bias toward basic and acidic residues; that stretch reads SDLRQRDLIDER. Positions 39-102 constitute a bZIP domain; that stretch reads DERKRKRKQS…VTIEAENDIL (64 aa). Residues 41 to 62 form a basic motif region; sequence RKRKRKQSNRESARRSRMRKQK. Residues 67 to 81 are leucine-zipper; sequence LTAQVTHLRKENAQI.

Forms heterodimers with BZIP1, BZIP9, BZIP10, BZIP25 and BZIP63. In terms of tissue distribution, expressed in the micropylar endosperm and radicle tip in early germinating seeds.

Its subcellular location is the nucleus. Functionally, transcription factor that binds to the DNA G-box motif 5'-CACGTG-3' of MAN7 promoter. Involved in the positive regulation of seed germination through MAN7 gene activation. MAN7 is required for both, loosening of the micropylar endosperm, and rupture of the seed coat in germinating seeds. This chain is bZIP transcription factor 44, found in Arabidopsis thaliana (Mouse-ear cress).